A 653-amino-acid chain; its full sequence is Extracellular metalloproteinase (653 aa).

An N-terminal signal peptide occupies residues 1–19 (MRSFLLASLASLSVISVYG). Residues 20–244 (HPHARSTLTR…VHAVVDYSAD (225 aa)) constitute a propeptide that is removed on maturation. N-linked (GlcNAc...) asparagine glycans are attached at residues Asn327, Asn336, and Asn412. Zn(2+) is bound at residue His429. Glu430 is a catalytic residue. His433 contributes to the Zn(2+) binding site. Residues Asn636 and Asn637 are each glycosylated (N-linked (GlcNAc...) asparagine).

The protein belongs to the peptidase M36 family. It depends on Zn(2+) as a cofactor.

The protein localises to the secreted. Secreted metalloproteinase that allows assimilation of proteinaceous substrates. The chain is Extracellular metalloproteinase (MEP) from Pyrenophora tritici-repentis (strain Pt-1C-BFP) (Wheat tan spot fungus).